A 199-amino-acid chain; its full sequence is Recombination protein RecR (199 aa).

Residues 57–72 (CPICGNITEKEVCDIC) form a C4-type zinc finger. Residues 80-176 (TTIMVVEQPK…KVTRLAAGLS (97 aa)) enclose the Toprim domain.

It belongs to the RecR family.

Functionally, may play a role in DNA repair. It seems to be involved in an RecBC-independent recombinational process of DNA repair. It may act with RecF and RecO. The chain is Recombination protein RecR from Lactobacillus helveticus (strain DPC 4571).